The following is a 362-amino-acid chain: Chorismate synthase (362 aa).

NADP(+) is bound at residue Arg47. FMN-binding positions include 124 to 126, Gly286, 301 to 305, and Arg327; these read RAS and KPTAT.

This sequence belongs to the chorismate synthase family. As to quaternary structure, homotetramer. It depends on FMNH2 as a cofactor.

It catalyses the reaction 5-O-(1-carboxyvinyl)-3-phosphoshikimate = chorismate + phosphate. The protein operates within metabolic intermediate biosynthesis; chorismate biosynthesis; chorismate from D-erythrose 4-phosphate and phosphoenolpyruvate: step 7/7. Functionally, catalyzes the anti-1,4-elimination of the C-3 phosphate and the C-6 proR hydrogen from 5-enolpyruvylshikimate-3-phosphate (EPSP) to yield chorismate, which is the branch point compound that serves as the starting substrate for the three terminal pathways of aromatic amino acid biosynthesis. This reaction introduces a second double bond into the aromatic ring system. This chain is Chorismate synthase, found in Synechococcus sp. (strain WH7803).